The primary structure comprises 143 residues: D-aminoacyl-tRNA deacylase (143 aa).

The short motif at 135–136 is the Gly-cisPro motif, important for rejection of L-amino acids element; that stretch reads GP.

The protein belongs to the DTD family. In terms of assembly, homodimer.

It is found in the cytoplasm. It carries out the reaction glycyl-tRNA(Ala) + H2O = tRNA(Ala) + glycine + H(+). The enzyme catalyses a D-aminoacyl-tRNA + H2O = a tRNA + a D-alpha-amino acid + H(+). In terms of biological role, an aminoacyl-tRNA editing enzyme that deacylates mischarged D-aminoacyl-tRNAs. Also deacylates mischarged glycyl-tRNA(Ala), protecting cells against glycine mischarging by AlaRS. Acts via tRNA-based rather than protein-based catalysis; rejects L-amino acids rather than detecting D-amino acids in the active site. By recycling D-aminoacyl-tRNA to D-amino acids and free tRNA molecules, this enzyme counteracts the toxicity associated with the formation of D-aminoacyl-tRNA entities in vivo and helps enforce protein L-homochirality. The chain is D-aminoacyl-tRNA deacylase from Mycobacterium bovis (strain ATCC BAA-935 / AF2122/97).